A 298-amino-acid polypeptide reads, in one-letter code: Elongation factor Ts (298 aa).

An involved in Mg(2+) ion dislocation from EF-Tu region spans residues 79-82; it reads TDFV.

This sequence belongs to the EF-Ts family.

The protein resides in the cytoplasm. Associates with the EF-Tu.GDP complex and induces the exchange of GDP to GTP. It remains bound to the aminoacyl-tRNA.EF-Tu.GTP complex up to the GTP hydrolysis stage on the ribosome. In Cereibacter sphaeroides (strain ATCC 17025 / ATH 2.4.3) (Rhodobacter sphaeroides), this protein is Elongation factor Ts.